Reading from the N-terminus, the 289-residue chain is MSTPYLLIDAGNSRVKWALVQADGTQTHSGAFSHGGQLVKGTGDPLQSRHEPDWSALPAPGSAWLSNVAGDAVARRIDAFIDRHWPGLARTTVRSAAQQCGVTNAYTTPSQLGSDRWAGMIGARAAFPGEPLLIATFGTATTLEALTADGVFVGGLIAPGWSLMMRSLGEHTAQLPTLDSTAARGLLDGDNAAGQREPAERGAWFATDTPRSLSSGCALAQIGLIERMWRHLQDEWQVSVRLVVGGGAAGELVQALSVPYTRHDSLVLAGLALIAAQAPVYPSTHTRPV.

Residue 9–16 (DAGNSRVK) participates in ATP binding. Substrate is bound by residues Y106 and 113–116 (GSDR). D115 acts as the Proton acceptor in catalysis. T139 contacts ATP. T209 is a substrate binding site.

This sequence belongs to the type III pantothenate kinase family. In terms of assembly, homodimer. It depends on NH4(+) as a cofactor. The cofactor is K(+).

The protein localises to the cytoplasm. It carries out the reaction (R)-pantothenate + ATP = (R)-4'-phosphopantothenate + ADP + H(+). The protein operates within cofactor biosynthesis; coenzyme A biosynthesis; CoA from (R)-pantothenate: step 1/5. In terms of biological role, catalyzes the phosphorylation of pantothenate (Pan), the first step in CoA biosynthesis. The sequence is that of Type III pantothenate kinase from Paraburkholderia phymatum (strain DSM 17167 / CIP 108236 / LMG 21445 / STM815) (Burkholderia phymatum).